A 294-amino-acid polypeptide reads, in one-letter code: Protease HtpX homolog (294 aa).

A run of 2 helical transmembrane segments spans residues 12-32 and 34-54; these read VLFG…ASSF and SPGV…YSYW. Histidine 138 lines the Zn(2+) pocket. Glutamate 139 is an active-site residue. Histidine 142 is a Zn(2+) binding site. 2 helical membrane-spanning segments follow: residues 152 to 172 and 188 to 208; these read SVAG…VFFG and LALL…QLAI. Residue glutamate 213 coordinates Zn(2+).

The protein belongs to the peptidase M48B family. The cofactor is Zn(2+).

It is found in the cell membrane. This Kineococcus radiotolerans (strain ATCC BAA-149 / DSM 14245 / SRS30216) protein is Protease HtpX homolog.